The following is a 199-amino-acid chain: Charged multivesicular body protein 1b (199 aa).

Coiled-coil stretches lie at residues 10-48 and 178-199; these read NLKFAAKELNRNSKRCDKEEKAEKAKIKKAIQKGNMEVA and TSVASAEQDELSQRLARLRDQV. Positions 167 to 199 are disordered; sequence ELPQGQTGSVGTSVASAEQDELSQRLARLRDQV. The segment covering 170-182 has biased composition (polar residues); the sequence is QGQTGSVGTSVAS. The short motif at 186 to 196 is the MIT-interacting motif element; sequence DELSQRLARLR.

The protein belongs to the SNF7 family. In terms of assembly, probable peripherally associated component of the endosomal sorting required for transport complex III (ESCRT-III).

It is found in the cytoplasm. The protein localises to the cytosol. The protein resides in the endosome. Its subcellular location is the late endosome membrane. Its function is as follows. Probable peripherally associated component of the endosomal sorting required for transport complex III (ESCRT-III) which is involved in multivesicular bodies (MVBs) formation and sorting of endosomal cargo proteins into MVBs. MVBs contain intraluminal vesicles (ILVs) that are generated by invagination and scission from the limiting membrane of the endosome and mostly are delivered to lysosomes enabling degradation of membrane proteins, such as stimulated growth factor receptors, lysosomal enzymes and lipids. The protein is Charged multivesicular body protein 1b (CHMP1B) of Gallus gallus (Chicken).